The following is a 234-amino-acid chain: Ribose-5-phosphate isomerase A (234 aa).

Substrate contacts are provided by residues T28–T31, D83–D86, and K96–G99. Catalysis depends on E105, which acts as the Proton acceptor. K123 is a binding site for substrate.

This sequence belongs to the ribose 5-phosphate isomerase family. As to quaternary structure, homodimer.

It carries out the reaction aldehydo-D-ribose 5-phosphate = D-ribulose 5-phosphate. It functions in the pathway carbohydrate degradation; pentose phosphate pathway; D-ribose 5-phosphate from D-ribulose 5-phosphate (non-oxidative stage): step 1/1. In terms of biological role, catalyzes the reversible conversion of ribose-5-phosphate to ribulose 5-phosphate. In Bartonella quintana (strain Toulouse) (Rochalimaea quintana), this protein is Ribose-5-phosphate isomerase A.